We begin with the raw amino-acid sequence, 438 residues long: tRNA modification GTPase MnmE (438 aa).

Positions 20, 79, and 119 each coordinate (6S)-5-formyl-5,6,7,8-tetrahydrofolate. One can recognise a TrmE-type G domain in the interval 215–360; the sequence is GVEVAIVGPP…LEAALAARVG (146 aa). Residues 225–230, 244–250, and 269–272 each bind GTP; these read NAGKSS, SDEAGTT, and DTAG. Mg(2+) is bound by residues Ser-229 and Thr-250. Position 438 (Lys-438) interacts with (6S)-5-formyl-5,6,7,8-tetrahydrofolate.

The protein belongs to the TRAFAC class TrmE-Era-EngA-EngB-Septin-like GTPase superfamily. TrmE GTPase family. In terms of assembly, homodimer. Heterotetramer of two MnmE and two MnmG subunits. Requires K(+) as cofactor.

The protein localises to the cytoplasm. Exhibits a very high intrinsic GTPase hydrolysis rate. Involved in the addition of a carboxymethylaminomethyl (cmnm) group at the wobble position (U34) of certain tRNAs, forming tRNA-cmnm(5)s(2)U34. The protein is tRNA modification GTPase MnmE of Parvibaculum lavamentivorans (strain DS-1 / DSM 13023 / NCIMB 13966).